The primary structure comprises 200 residues: NADH-quinone oxidoreductase subunit C (200 aa).

It belongs to the complex I 30 kDa subunit family. As to quaternary structure, NDH-1 is composed of 14 different subunits. Subunits NuoB, C, D, E, F, and G constitute the peripheral sector of the complex.

It localises to the cell inner membrane. The enzyme catalyses a quinone + NADH + 5 H(+)(in) = a quinol + NAD(+) + 4 H(+)(out). NDH-1 shuttles electrons from NADH, via FMN and iron-sulfur (Fe-S) centers, to quinones in the respiratory chain. The immediate electron acceptor for the enzyme in this species is believed to be ubiquinone. Couples the redox reaction to proton translocation (for every two electrons transferred, four hydrogen ions are translocated across the cytoplasmic membrane), and thus conserves the redox energy in a proton gradient. The polypeptide is NADH-quinone oxidoreductase subunit C (Rhizobium johnstonii (strain DSM 114642 / LMG 32736 / 3841) (Rhizobium leguminosarum bv. viciae)).